The primary structure comprises 240 residues: Methylthioribulose-1-phosphate dehydratase (240 aa).

Cysteine 99 provides a ligand contact to substrate. Zn(2+) is bound by residues histidine 116 and histidine 118. The Proton donor/acceptor role is filled by glutamate 145. Residue histidine 201 participates in Zn(2+) binding.

This sequence belongs to the aldolase class II family. MtnB subfamily. Zn(2+) serves as cofactor.

Its subcellular location is the cytoplasm. It catalyses the reaction 5-(methylsulfanyl)-D-ribulose 1-phosphate = 5-methylsulfanyl-2,3-dioxopentyl phosphate + H2O. It functions in the pathway amino-acid biosynthesis; L-methionine biosynthesis via salvage pathway; L-methionine from S-methyl-5-thio-alpha-D-ribose 1-phosphate: step 2/6. Its function is as follows. Catalyzes the dehydration of methylthioribulose-1-phosphate (MTRu-1-P) into 2,3-diketo-5-methylthiopentyl-1-phosphate (DK-MTP-1-P). This is Methylthioribulose-1-phosphate dehydratase from Ajellomyces capsulatus (strain G186AR / H82 / ATCC MYA-2454 / RMSCC 2432) (Darling's disease fungus).